Reading from the N-terminus, the 64-residue chain is Ferredoxin-like protein in nif region (64 aa).

Residues 2-30 form the 4Fe-4S ferredoxin-type domain; the sequence is AFKIIASQCTQCGACEFECPSGAISFKTD. [4Fe-4S] cluster is bound by residues C10, C13, C16, C20, C39, C42, C51, and C55.

The cofactor is [4Fe-4S] cluster.

This is Ferredoxin-like protein in nif region (fdxN) from Rhizobium leguminosarum bv. trifolii.